A 496-amino-acid chain; its full sequence is Probable fatty acyl-CoA reductase 5 (496 aa).

Belongs to the fatty acyl-CoA reductase family. As to expression, expressed in the endodermal cell layer surrounding the central vasculature in roots. Expressed in floral organs of very young unopened buds and receptacle of siliques.

The catalysed reaction is a long-chain fatty acyl-CoA + 2 NADPH + 2 H(+) = a long-chain primary fatty alcohol + 2 NADP(+) + CoA. Functionally, catalyzes the reduction of fatty acyl-CoA to fatty alcohols. Catalyzes specifically the formation of C18:0 fatty alcohol. Provides the fatty alcohols required for synthesis of suberin in roots, seed coat and wound-induced leaf tissue. Provides the fatty alcohols required for synthesis of alkyl hydroxycinnamates in root waxes. This Arabidopsis thaliana (Mouse-ear cress) protein is Probable fatty acyl-CoA reductase 5.